We begin with the raw amino-acid sequence, 408 residues long: Lupus La protein (408 aa).

The HTH La-type RNA-binding domain occupies 7–99 (NEKMAALEAK…RRSPSKPLPE (93 aa)). Phosphoserine is present on residues serine 92 and serine 94. The 77-residue stretch at 111 to 187 (RSVYIKGFPT…TDLLILFKDD (77 aa)) folds into the RRM domain. An N6-acetyllysine modification is found at lysine 116. Threonine 120 carries the phosphothreonine modification. The residue at position 128 (lysine 128) is an N6-acetyllysine. Serine 225 bears the Phosphoserine mark. A xRRM domain is found at 227-348 (EEKIGCLLKF…KGKGNKAAQP (122 aa)). Lysine 328, lysine 341, and lysine 360 each carry N6-acetyllysine. Over residues 329–342 (WKSKGRRFKGKGKG) the composition is skewed to basic residues. The interval 329 to 408 (WKSKGRRFKG…QKTENGAGDQ (80 aa)) is disordered. Threonine 362 is modified (phosphothreonine). At serine 366 the chain carries Phosphoserine; by CK2. The span at 384-395 (RAREETDKEEPA) shows a compositional bias: basic and acidic residues.

In terms of assembly, interacts with DDX15. May interact with RUFY1. Post-translationally, phosphorylated. The phosphorylation sites are at the C-terminal part of the protein. The N-terminus is blocked.

Its subcellular location is the nucleus. Binds to the 3' poly(U) terminus of nascent RNA polymerase III transcripts, protecting them from exonuclease digestion and facilitating their folding and maturation. In case of Coxsackievirus B3 infection, binds to the viral internal ribosome entry site (IRES) and stimulates the IRES-mediated translation. This is Lupus La protein (SSB) from Homo sapiens (Human).